The following is a 125-amino-acid chain: Large ribosomal subunit protein bL12 (125 aa).

The protein belongs to the bacterial ribosomal protein bL12 family. In terms of assembly, homodimer. Part of the ribosomal stalk of the 50S ribosomal subunit. Forms a multimeric L10(L12)X complex, where L10 forms an elongated spine to which 2 to 4 L12 dimers bind in a sequential fashion. Binds GTP-bound translation factors.

Forms part of the ribosomal stalk which helps the ribosome interact with GTP-bound translation factors. Is thus essential for accurate translation. The sequence is that of Large ribosomal subunit protein bL12 from Afipia carboxidovorans (strain ATCC 49405 / DSM 1227 / KCTC 32145 / OM5) (Oligotropha carboxidovorans).